The chain runs to 252 residues: ATP-dependent L-serine kinase (252 aa).

The active site involves Glu-35. Val-73 contacts O-phospho-L-serine. Residue Asp-74 coordinates Mg(2+). Residues Gly-75, His-76, His-77, Trp-107, Lys-231, Thr-233, and His-235 each coordinate O-phospho-L-serine.

Belongs to the SerK family. Monomer. Requires Mg(2+) as cofactor.

The catalysed reaction is L-serine + ATP = O-phospho-L-serine + ADP + H(+). Its function is as follows. Free serine kinase that uses ATP to phosphorylate L-serine to yield O-phospho-L-serine and ADP. Can use ATP, UTP, CTP, GTP and the inorganic polyphosphates triphosphate and tetraphosphate as phosphate donors, with a preference for nucleoside 5'-triphosphates, but cannot use ADP. The catalytic efficiency is highest for ATP. Is specific for L-serine and cannot phosphorylate structurally similar compounds such as D-serine, L-threonine, L-homoserine, hydroxypyruvate, 3-hydroxypropionate and DL-glycerate. Likely contributes to serine metabolism, including cysteine biosynthesis. The chain is ATP-dependent L-serine kinase from Staphylothermus marinus (strain ATCC 43588 / DSM 3639 / JCM 9404 / F1).